The chain runs to 239 residues: Sugar fermentation stimulation protein homolog (239 aa).

This sequence belongs to the SfsA family.

The polypeptide is Sugar fermentation stimulation protein homolog (Caulobacter vibrioides (strain ATCC 19089 / CIP 103742 / CB 15) (Caulobacter crescentus)).